We begin with the raw amino-acid sequence, 569 residues long: Urease subunit alpha (569 aa).

In terms of domain architecture, Urease spans 131–569 (GSIDTHIHFI…VPMAQRYFLL (439 aa)). Ni(2+)-binding residues include His136, His138, and Lys219. At Lys219 the chain carries N6-carboxylysine. Substrate is bound at residue His221. Residues His248 and His274 each contribute to the Ni(2+) site. His322 (proton donor) is an active-site residue. Asp362 provides a ligand contact to Ni(2+).

Belongs to the metallo-dependent hydrolases superfamily. Urease alpha subunit family. As to quaternary structure, heterotrimer of UreA (gamma), UreB (beta) and UreC (alpha) subunits. Three heterotrimers associate to form the active enzyme. Ni cation serves as cofactor. In terms of processing, carboxylation allows a single lysine to coordinate two nickel ions.

Its subcellular location is the cytoplasm. The enzyme catalyses urea + 2 H2O + H(+) = hydrogencarbonate + 2 NH4(+). The protein operates within nitrogen metabolism; urea degradation; CO(2) and NH(3) from urea (urease route): step 1/1. The polypeptide is Urease subunit alpha (Prochlorococcus marinus (strain MIT 9301)).